Consider the following 327-residue polypeptide: Inactive peptidyl-prolyl cis-trans isomerase FKBP6 (327 aa).

A disordered region spans residues methionine 1–serine 20. A PPIase FKBP-type domain is found at aspartate 54–leucine 143. 3 TPR repeats span residues alanine 171–arginine 204, leucine 219–asparagine 252, and alanine 253–asparagine 286.

Belongs to the FKBP6 family. Interacts with HSP72/HSPA2 and CLTC. Interacts with GAPDH; leading to inhibit GAPDH catalytic activity. Interacts (via TPR repeats) with HSP90.

It is found in the cytoplasm. The protein resides in the cytosol. Its subcellular location is the nucleus. The protein localises to the chromosome. Functionally, co-chaperone required during spermatogenesis to repress transposable elements and prevent their mobilization, which is essential for the germline integrity. Acts via the piRNA metabolic process, which mediates the repression of transposable elements during meiosis by forming complexes composed of piRNAs and Piwi proteins and govern the methylation and subsequent repression of transposons. Acts as a co-chaperone via its interaction with HSP90 and is required for the piRNA amplification process, the secondary piRNA biogenesis. May be required together with HSP90 in removal of 16 nucleotide ping-pong by-products from Piwi complexes, possibly facilitating turnover of Piwi complexes. The polypeptide is Inactive peptidyl-prolyl cis-trans isomerase FKBP6 (Fkbp6) (Rattus norvegicus (Rat)).